The primary structure comprises 580 residues: Serine/threonine-protein kinase PINK1, mitochondrial (580 aa).

Residues methionine 1–leucine 77 constitute a mitochondrion transit peptide. Positions valine 28 to glycine 60 are disordered. A helical transmembrane segment spans residues glycine 94–leucine 110. The required for outer membrane localization stretch occupies residues isoleucine 111–glutamate 117. The region spanning tyrosine 156 to leucine 510 is the Protein kinase domain. Residues isoleucine 162–valine 170 and lysine 218 each bind ATP. Position 227 is a phosphoserine; by autocatalysis (serine 227). Aspartate 361 serves as the catalytic Proton acceptor. Serine 401 bears the Phosphoserine; by autocatalysis mark.

The protein belongs to the protein kinase superfamily. Ser/Thr protein kinase family. As to quaternary structure, upon mitochondrial depolarization, it forms a supercomplex with TOM and TIM23 complexes. PINK1-TOM-TIM23 supercomplex formation requires PINK1 interaction with TOMM20 and TOMM70 and is critical for PINK1 stabilization at the outer mitochondrial membrane, kinase activation and downstream mitophagy. Upon mitochondrial depolarization, interacts with TIMM23; the interaction is required for PINK1 accumulation at the outer mitochondrial membrane, kinase activation by autophosphorylation and PRKN recruitement to mitochondria. Interacts with PRKN. Interacts with FBXO7. Forms a complex with PRKN and PARK7. Interacts with NENF. Requires Mg(2+) as cofactor. Proteolytically cleaved. In healthy cells, the precursor is continuously imported into the inner mitochondrial membrane (IMM), where it is proteolytically cleaved by mitochondrial-processing peptidase (MPP) and then undergoes further proteolytic cleavage by PARL or AFG3L2 to give rise to the 52 kDa short form. The 52 kDa short form is then released into the cytosol where it rapidly undergoes proteasome-dependent degradation. In unhealthy cells, when cellular stress conditions lead to the loss of mitochondrial membrane potential, mitochondrial import is impaired leading to the precursor accumulating on the outer mitochondrial membrane (OMM). If accumulation at the OMM fails and it is imported into the depolarized mitochondria, it undergoes cleavage by the IMM protease OMA1, promoting its subsequent degradation by the proteasome. In terms of processing, autophosphorylated. Loss of mitochondrial membrane potential results in the precursor accumulating on the outer mitochondrial membrane (OMM) where it is activated by autophosphorylation. Autophosphorylation at Ser-227 and Ser-401 is sufficient and essential for selective recruitment of PRKN to depolarized mitochondria, via PINK1-dependent phosphorylation of ubiquitin and maybe PRKN.

Its subcellular location is the mitochondrion outer membrane. It is found in the mitochondrion inner membrane. The protein resides in the cytoplasm. The protein localises to the cytosol. It carries out the reaction L-seryl-[protein] + ATP = O-phospho-L-seryl-[protein] + ADP + H(+). It catalyses the reaction L-threonyl-[protein] + ATP = O-phospho-L-threonyl-[protein] + ADP + H(+). Serine/threonine-protein kinase which acts as a sensor of mitochondrial damage and protects against mitochondrial dysfunction during cellular stress. It phosphorylates mitochondrial proteins to coordinate mitochondrial quality control mechanisms that remove and replace dysfunctional mitochondrial components. Depending on the severity of mitochondrial damage, activity ranges from preventing apoptosis and stimulating mitochondrial biogenesis to eliminating severely damaged mitochondria via PINK1-PRKN-dependent mitophagy. When cellular stress results in irreversible mitochondrial damage, PINK1 accumulates at the outer mitochondrial membrane (OMM) where it phosphorylates pre-existing polyubiquitin chains at 'Ser-65', recruits PRKN from the cytosol to the OMM and activates PRKN by phosphorylation at 'Ser-65'; activated PRKN then ubiquinates VDAC1 and other OMM proteins to initiate mitophagy. The PINK1-PRKN pathway also promotes fission of damaged mitochondria through phosphorylation and PRKN-dependent degradation of mitochondrial proteins involved in fission such as MFN2. This prevents the refusion of unhealthy mitochondria with the mitochondrial network or initiates mitochondrial fragmentation facilitating their later engulfment by autophagosomes. Also promotes mitochondrial fission independently of PRKN and ATG7-mediated mitophagy, via the phosphorylation and activation of DNM1L. Regulates motility of damaged mitochondria by promoting the ubiquitination and subsequent degradation of MIRO1 and MIRO2; in motor neurons, this likely inhibits mitochondrial intracellular anterograde transport along the axons which probably increases the chance of the mitochondria undergoing mitophagy in the soma. Required for ubiquinone reduction by mitochondrial complex I by mediating phosphorylation of complex I subunit NDUFA10. Phosphorylates LETM1, positively regulating its mitochondrial calcium transport activity. The sequence is that of Serine/threonine-protein kinase PINK1, mitochondrial from Rattus norvegicus (Rat).